A 630-amino-acid chain; its full sequence is Transcription factor MYC1 (630 aa).

Disordered stretches follow at residues 356 to 398 (FGDS…NNEE) and 430 to 463 (VKEA…EAER). Residues 440 to 449 (KPRKRGRKPA) are compositionally biased toward basic residues. Over residues 450-463 (NGREEPLNHVEAER) the composition is skewed to basic and acidic residues. The basic motif; degenerate stretch occupies residues 453 to 466 (EEPLNHVEAERQRR). The bHLH domain maps to 453–502 (EEPLNHVEAERQRREKLNQRFYALRAVVPNVSKMDKASLLGDAIAYINEL). The segment at 467–502 (EKLNQRFYALRAVVPNVSKMDKASLLGDAIAYINEL) is helix-loop-helix motif.

As to expression, highly expressed in trichomes and at lower levels in leaves and flowers. Expressed at low levels in roots, stems, leaves, flowers and fruits.

The protein localises to the nucleus. Functionally, transcriptional activator that binds to the G-box motif (5'-AACGTG-3') found in a number of promoters of jasmonate-induced genes. Transcription activator involved in the transcriptional regulation of terpene biosynthesis in glandular trichomes. Binds to the promoter of the linalool synthase TPS5 and promotes TPS5 gene transactivation. Acts synergistically with EOT1 in the transactivation of TPS5. Involved in type VI glandular trichome development. Involved in the activation of terpene synthases required for volatile mono- and sesquiterpenes synthesis by the glandular cells of type VI trichomes. The protein is Transcription factor MYC1 of Solanum lycopersicum (Tomato).